The primary structure comprises 131 residues: Ribonuclease P protein component (131 aa).

This sequence belongs to the RnpA family. As to quaternary structure, consists of a catalytic RNA component (M1 or rnpB) and a protein subunit.

The enzyme catalyses Endonucleolytic cleavage of RNA, removing 5'-extranucleotides from tRNA precursor.. RNaseP catalyzes the removal of the 5'-leader sequence from pre-tRNA to produce the mature 5'-terminus. It can also cleave other RNA substrates such as 4.5S RNA. The protein component plays an auxiliary but essential role in vivo by binding to the 5'-leader sequence and broadening the substrate specificity of the ribozyme. In Synechococcus sp. (strain WH7803), this protein is Ribonuclease P protein component.